The primary structure comprises 555 residues: Oxygen-dependent choline dehydrogenase (555 aa).

4–33 provides a ligand contact to FAD; sequence DYIIIGAGSAGNVLATRLTEDADVSVLLLE. The segment at 180 to 202 is disordered; it reads QQEGFGPMDRTVTPKGRRASTAR. The active-site Proton acceptor is the His-473.

The protein belongs to the GMC oxidoreductase family. The cofactor is FAD.

The catalysed reaction is choline + A = betaine aldehyde + AH2. The enzyme catalyses betaine aldehyde + NAD(+) + H2O = glycine betaine + NADH + 2 H(+). Its pathway is amine and polyamine biosynthesis; betaine biosynthesis via choline pathway; betaine aldehyde from choline (cytochrome c reductase route): step 1/1. Involved in the biosynthesis of the osmoprotectant glycine betaine. Catalyzes the oxidation of choline to betaine aldehyde and betaine aldehyde to glycine betaine at the same rate. The chain is Oxygen-dependent choline dehydrogenase from Serratia proteamaculans (strain 568).